We begin with the raw amino-acid sequence, 231 residues long: Insertion sequence IS1162 putative ATP-binding protein (231 aa).

Residue 107 to 114 (GPTGVGKT) coordinates ATP.

The protein belongs to the IS21/IS1162 putative ATP-binding protein family.

The sequence is that of Insertion sequence IS1162 putative ATP-binding protein from Pseudomonas fluorescens.